A 341-amino-acid polypeptide reads, in one-letter code: Anthranilate phosphoribosyltransferase (341 aa).

Residues G79, 82–83 (GD), T87, 89–92 (NIST), 107–115 (KHGNRAVSS), and S119 each bind 5-phospho-alpha-D-ribose 1-diphosphate. Residue G79 coordinates anthranilate. S91 serves as a coordination point for Mg(2+). N110 contacts anthranilate. R165 contacts anthranilate. Mg(2+) is bound by residues D224 and E225.

It belongs to the anthranilate phosphoribosyltransferase family. Homodimer. Requires Mg(2+) as cofactor.

The catalysed reaction is N-(5-phospho-beta-D-ribosyl)anthranilate + diphosphate = 5-phospho-alpha-D-ribose 1-diphosphate + anthranilate. It functions in the pathway amino-acid biosynthesis; L-tryptophan biosynthesis; L-tryptophan from chorismate: step 2/5. Catalyzes the transfer of the phosphoribosyl group of 5-phosphorylribose-1-pyrophosphate (PRPP) to anthranilate to yield N-(5'-phosphoribosyl)-anthranilate (PRA). The polypeptide is Anthranilate phosphoribosyltransferase (Bacillus cereus (strain ZK / E33L)).